A 152-amino-acid polypeptide reads, in one-letter code: UPF0178 protein SaurJH9_0705 (152 aa).

The protein belongs to the UPF0178 family.

This is UPF0178 protein SaurJH9_0705 from Staphylococcus aureus (strain JH9).